The following is a 242-amino-acid chain: UPF0309 protein BOV_A0853 (242 aa).

Residues 30-209 (AADLIAAAAR…FADVAARLVG (180 aa)) enclose the SIS domain.

Belongs to the UPF0309 family.

The protein is UPF0309 protein BOV_A0853 of Brucella ovis (strain ATCC 25840 / 63/290 / NCTC 10512).